A 600-amino-acid polypeptide reads, in one-letter code: Mitoguardin 1 (600 aa).

Helical transmembrane passes span 15-32 (TYAV…YSLS) and 38-58 (PVAK…IFLA). 2 positions are modified to phosphoserine: serine 257 and serine 261.

This sequence belongs to the mitoguardin family. Homodimer and heterodimer; forms heterodimers with MIGA2. Interacts with PLD6/MitoPLD.

The protein localises to the mitochondrion outer membrane. Its function is as follows. Regulator of mitochondrial fusion. Acts by forming homo- and heterodimers at the mitochondrial outer membrane and facilitating the formation of PLD6/MitoPLD dimers. May act by regulating phospholipid metabolism via PLD6/MitoPLD. This is Mitoguardin 1 from Mus musculus (Mouse).